We begin with the raw amino-acid sequence, 589 residues long: Isocitrate dehydrogenase kinase/phosphatase (589 aa).

ATP-binding positions include alanine 322–leucine 328 and lysine 343. The active site involves aspartate 378.

It belongs to the AceK family.

It is found in the cytoplasm. The enzyme catalyses L-seryl-[isocitrate dehydrogenase] + ATP = O-phospho-L-seryl-[isocitrate dehydrogenase] + ADP + H(+). Functionally, bifunctional enzyme which can phosphorylate or dephosphorylate isocitrate dehydrogenase (IDH) on a specific serine residue. This is a regulatory mechanism which enables bacteria to bypass the Krebs cycle via the glyoxylate shunt in response to the source of carbon. When bacteria are grown on glucose, IDH is fully active and unphosphorylated, but when grown on acetate or ethanol, the activity of IDH declines drastically concomitant with its phosphorylation. The protein is Isocitrate dehydrogenase kinase/phosphatase of Azoarcus sp. (strain BH72).